A 201-amino-acid chain; its full sequence is 3-isopropylmalate dehydratase small subunit (201 aa).

The protein belongs to the LeuD family. LeuD type 1 subfamily. Heterodimer of LeuC and LeuD.

The catalysed reaction is (2R,3S)-3-isopropylmalate = (2S)-2-isopropylmalate. The protein operates within amino-acid biosynthesis; L-leucine biosynthesis; L-leucine from 3-methyl-2-oxobutanoate: step 2/4. Catalyzes the isomerization between 2-isopropylmalate and 3-isopropylmalate, via the formation of 2-isopropylmaleate. The sequence is that of 3-isopropylmalate dehydratase small subunit from Shewanella amazonensis (strain ATCC BAA-1098 / SB2B).